The chain runs to 396 residues: Diels-Alderase mpsD (396 aa).

This sequence belongs to the Diels-Alderase family.

Its pathway is secondary metabolite biosynthesis. Its function is as follows. Diels-Alderase; part of the gene cluster that mediates the biosynthesis of macrophasetins, 3-decalinoyltetramic acids (DTAs) which feature a tetramate (pyrrolidine-2,4-dione) unit connected to a decalin fragment and that have potent bioactivities. The PKS-NRPS mpsA together with its associated enoylreductase partner mpsG incorporate one unit of acetyl-CoA, seven units of malonyl-CoA, and one unit of L-alanine to assemble the linear tetramic acid intermediate corresponding to the backbone of macrophasetins. Without the Diels-Alderase mpsD, the mpsA/G product can undergo the non-enzymatic intramolecular Diels-Alder (IMDA) reaction to generate both macrophasetin A and macrophasetin B. Catalyzed by mpsD, the linear tetramic acid intermediate is thoroughly converted to macrophasetin A via the endo-IMDA reaction in a regioselective and stereoselective manner. Finally, the cytochrome P450 monooxygenase mpsF catalyzes the hydroxylation at C20 to yield the end product macrophasetin C. The polypeptide is Diels-Alderase mpsD (Macrophomina phaseolina (strain MS6) (Charcoal rot fungus)).